The primary structure comprises 691 residues: Protein simr-1 (691 aa).

In terms of domain architecture, Tudor; degenerate spans 139 to 204 (EAEITPGTIY…TLFHLGKFTI (66 aa)). 2 disordered regions span residues 547–573 (TGPC…DMSI) and 588–618 (DNLN…TTNS). 2 stretches are compositionally biased toward polar residues: residues 549-573 (PCGS…DMSI) and 588-598 (DNLNDTENWPN).

It localises to the cytoplasm. The protein resides in the perinuclear region. In terms of biological role, acts downstream of piRNA production to promote mediator complex-dependent endogenous siRNA biogenesis from piRNA-target mRNAs in the RNA interference pathway in germ cells. Not required to identify target mRNA by the piRNA pathway. Plays a role in both spermatogenesis and oogenesis and in maintaining fertility over multiple generations, probably by directing mutator-dependent silencing to piRNA-targeted genes. The protein is Protein simr-1 of Caenorhabditis elegans.